A 367-amino-acid polypeptide reads, in one-letter code: Developmentally-regulated GTP-binding protein 1 (367 aa).

The residue at position 2 (S2) is an N-acetylserine. The tract at residues 2 to 16 (SSTLAKIAEIEAEMA) is required for interaction with STK16. (3S)-3-hydroxylysine is present on K22. Residues 65–290 (ARIGFVGFPS…LLEKIWDYLK (226 aa)) form the OBG-type G domain. Residues 71–78 (GFPSVGKS), 96–100 (FTTLT), 117–120 (DLPG), 248–251 (NKID), and 271–273 (SAH) each bind GTP. Residues S78 and T98 each coordinate Mg(2+). T100 bears the Phosphothreonine; by STK16 mark. Residues 290–366 (KLVRIYTKPK…EDEDVIQIVK (77 aa)) form the TGS domain.

This sequence belongs to the TRAFAC class OBG-HflX-like GTPase superfamily. OBG GTPase family. In terms of assembly, interacts (via its C-terminal) with TAL1. Interacts with DFRP1/ZC3H15; this interaction prevents DRG1 poly-ubiquitination and degradation by proteasome. DRG1-ZC3H15/DFRP1 complex co-sediments with polysomes. Interacts with STK16. Interacts with JMJD7. Post-translationally, sumoylated by UBE2I in response to MEKK1-mediated stimuli. Hydroxylated (with S stereochemistry) at C-3 of Lys-22 by JMJD7. In terms of processing, phosphorylated at Thr-100 by STK16. Post-translationally, polyubiquitinated; this modification induces proteolytic degradation and is impaired by interaction with ZC3H15.

It is found in the nucleus. The protein localises to the cytoplasm. It carries out the reaction GTP + H2O = GDP + phosphate + H(+). The GTPase activity is enhanced by potassium ions as well as by DFRP1 binding. Catalyzes the conversion of GTP to GDP through hydrolysis of the gamma-phosphate bond in GTP. Appears to have an intrinsic GTPase activity that is stimulated by ZC3H15/DFRP1 binding likely by increasing the affinity for the potassium ions. When hydroxylated at C-3 of 'Lys-22' by JMJD7, may bind to RNA and play a role in translation. Binds to microtubules and promotes microtubule polymerization and bundling that are required for mitotic spindle assembly during prophase to anaphase transition. GTPase activity is not necessary for these microtubule-related functions. The sequence is that of Developmentally-regulated GTP-binding protein 1 (DRG1) from Bos taurus (Bovine).